Here is an 889-residue protein sequence, read N- to C-terminus: Valine--tRNA ligase (889 aa).

A 'HIGH' region motif is present at residues 50-60 (PNVTGKLHLGH). The 'KMSKS' region motif lies at 532–536 (KMSKS). Lys535 contributes to the ATP binding site. Positions 816 to 889 (LAELVDLDEE…QRLVDIKAEA (74 aa)) form a coiled coil.

Belongs to the class-I aminoacyl-tRNA synthetase family. ValS type 1 subfamily. Monomer.

Its subcellular location is the cytoplasm. The enzyme catalyses tRNA(Val) + L-valine + ATP = L-valyl-tRNA(Val) + AMP + diphosphate. Catalyzes the attachment of valine to tRNA(Val). As ValRS can inadvertently accommodate and process structurally similar amino acids such as threonine, to avoid such errors, it has a 'posttransfer' editing activity that hydrolyzes mischarged Thr-tRNA(Val) in a tRNA-dependent manner. The sequence is that of Valine--tRNA ligase from Lactiplantibacillus plantarum (strain ATCC BAA-793 / NCIMB 8826 / WCFS1) (Lactobacillus plantarum).